A 154-amino-acid polypeptide reads, in one-letter code: Terephthalate 1,2-dioxygenase, terminal oxygenase component subunit beta 2 (154 aa).

Belongs to the bacterial ring-hydroxylating dioxygenase beta subunit family. In terms of assembly, heterotetramer composed of 2 alpha (TphA2I and TphA2II) and 2 beta (TphA3I and TphA3II) subunits. Part of a multicomponent enzyme system composed of a reductase (TphA1I or TphA1II) and a two-subunit oxygenase component (TphA2I or TphA2II and TphA3I or TphA3II). Requires Fe cation as cofactor.

It catalyses the reaction terephthalate + NADH + O2 + H(+) = (3S,4R)-3,4-dihydroxycyclohexa-1,5-diene-1,4-dicarboxylate + NAD(+). Its activity is regulated as follows. Inhibited by EDTA. Component of the terephthalate 1,2-dioxygenase multicomponent enzyme system which catalyzes the dioxygenation of terephthalate (TER/TPA) to 1,2-dihydroxy-3,5-cyclohexadiene-1,4-dicarboxylic acid (DCD). It can also use 2,5-dicarboxypyridine (PDC) and 1,4-napthalenedicarboxylic acid (NDC) as substrates, and preferentially uses NADPH which is the physiological electron donor. This is Terephthalate 1,2-dioxygenase, terminal oxygenase component subunit beta 2 (tphA3II) from Comamonas sp.